A 77-amino-acid polypeptide reads, in one-letter code: Translation initiation factor IF-1, chloroplastic (77 aa).

One can recognise an S1-like domain in the interval 1–71 (MKEQKLIHEG…TRGRIIYRLR (71 aa)).

This sequence belongs to the IF-1 family. Component of the 30S ribosomal translation pre-initiation complex which assembles on the 30S ribosome in the order IF-2 and IF-3, IF-1 and N-formylmethionyl-tRNA(fMet); mRNA recruitment can occur at any time during PIC assembly.

Its subcellular location is the plastid. It localises to the chloroplast. In terms of biological role, one of the essential components for the initiation of protein synthesis. Stabilizes the binding of IF-2 and IF-3 on the 30S subunit to which N-formylmethionyl-tRNA(fMet) subsequently binds. Helps modulate mRNA selection, yielding the 30S pre-initiation complex (PIC). Upon addition of the 50S ribosomal subunit IF-1, IF-2 and IF-3 are released leaving the mature 70S translation initiation complex. This is Translation initiation factor IF-1, chloroplastic from Phalaenopsis aphrodite subsp. formosana (Moth orchid).